The sequence spans 63 residues: Large ribosomal subunit protein uL29 (63 aa).

The protein belongs to the universal ribosomal protein uL29 family.

In Salmonella agona (strain SL483), this protein is Large ribosomal subunit protein uL29.